The sequence spans 229 residues: Ribonuclease 3 (229 aa).

An RNase III domain is found at 5–136 (LAELERALGI…VIGAIYLDQG (132 aa)). Glutamate 49 is a Mg(2+) binding site. Residue aspartate 53 is part of the active site. Mg(2+) is bound by residues aspartate 122 and glutamate 125. The active site involves glutamate 125. The region spanning 161–229 (DPTTRLQEIV…AQAALADIDR (69 aa)) is the DRBM domain.

Belongs to the ribonuclease III family. As to quaternary structure, homodimer. It depends on Mg(2+) as a cofactor.

Its subcellular location is the cytoplasm. It catalyses the reaction Endonucleolytic cleavage to 5'-phosphomonoester.. Digests double-stranded RNA. Involved in the processing of primary rRNA transcript to yield the immediate precursors to the large and small rRNAs (23S and 16S). Processes some mRNAs, and tRNAs when they are encoded in the rRNA operon. Processes pre-crRNA and tracrRNA of type II CRISPR loci if present in the organism. The polypeptide is Ribonuclease 3 (Chloroflexus aggregans (strain MD-66 / DSM 9485)).